Consider the following 258-residue polypeptide: Imidazole glycerol phosphate synthase subunit HisF (258 aa).

Residues Asp11 and Asp130 contribute to the active site.

It belongs to the HisA/HisF family. Heterodimer of HisH and HisF.

It is found in the cytoplasm. The catalysed reaction is 5-[(5-phospho-1-deoxy-D-ribulos-1-ylimino)methylamino]-1-(5-phospho-beta-D-ribosyl)imidazole-4-carboxamide + L-glutamine = D-erythro-1-(imidazol-4-yl)glycerol 3-phosphate + 5-amino-1-(5-phospho-beta-D-ribosyl)imidazole-4-carboxamide + L-glutamate + H(+). Its pathway is amino-acid biosynthesis; L-histidine biosynthesis; L-histidine from 5-phospho-alpha-D-ribose 1-diphosphate: step 5/9. Its function is as follows. IGPS catalyzes the conversion of PRFAR and glutamine to IGP, AICAR and glutamate. The HisF subunit catalyzes the cyclization activity that produces IGP and AICAR from PRFAR using the ammonia provided by the HisH subunit. This is Imidazole glycerol phosphate synthase subunit HisF from Shigella flexneri serotype 5b (strain 8401).